The chain runs to 302 residues: Sulfate adenylyltransferase subunit 2 (302 aa).

It belongs to the PAPS reductase family. CysD subfamily. As to quaternary structure, heterodimer composed of CysD, the smaller subunit, and CysN.

It carries out the reaction sulfate + ATP + H(+) = adenosine 5'-phosphosulfate + diphosphate. Its pathway is sulfur metabolism; hydrogen sulfide biosynthesis; sulfite from sulfate: step 1/3. With CysN forms the ATP sulfurylase (ATPS) that catalyzes the adenylation of sulfate producing adenosine 5'-phosphosulfate (APS) and diphosphate, the first enzymatic step in sulfur assimilation pathway. APS synthesis involves the formation of a high-energy phosphoric-sulfuric acid anhydride bond driven by GTP hydrolysis by CysN coupled to ATP hydrolysis by CysD. The protein is Sulfate adenylyltransferase subunit 2 of Xanthomonas euvesicatoria pv. vesicatoria (strain 85-10) (Xanthomonas campestris pv. vesicatoria).